A 219-amino-acid chain; its full sequence is Guanylate kinase (219 aa).

Residues 15-194 form the Guanylate kinase-like domain; it reads GLMFVLSSPS…AFESVKAILR (180 aa). ATP is bound at residue 22–29; it reads SPSGAGKT.

Belongs to the guanylate kinase family.

It is found in the cytoplasm. It carries out the reaction GMP + ATP = GDP + ADP. Essential for recycling GMP and indirectly, cGMP. In Rhodopseudomonas palustris (strain BisB5), this protein is Guanylate kinase.